A 300-amino-acid chain; its full sequence is Heme A synthase (300 aa).

Residues 1–8 lie on the Cytoplasmic side of the membrane; sequence MLKEKNLK. The helical transmembrane segment at 9–29 threads the bilayer; that stretch reads WLSLFTTVLMLFVQIGGALVT. The Extracellular segment spans residues 30 to 64; sequence KTGSADGCGSSWPLCHGKFVPTHIPKETLIELAHR. Cysteines 37 and 44 form a disulfide. E60 is a catalytic residue. H63 serves as a coordination point for heme o. The helical transmembrane segment at 65–85 threads the bilayer; that stretch reads GVSGLALLSVTWLVILSIKYI. Residues 86-92 lie on the Cytoplasmic side of the membrane; the sequence is GHKKETK. The chain crosses the membrane as a helical span at residues 93–113; it reads FLCYMSIGFIFAQALIGAAAV. Residues 114-123 lie on the Extracellular side of the membrane; sequence MWQQNGFVLA. A helical membrane pass occupies residues 124–144; sequence LHFGISLISFSAVFLLTLLIF. A heme o-binding site is contributed by H125. The Cytoplasmic segment spans residues 145-163; it reads EVDQKFDATKLILQPKLRR. A helical transmembrane segment spans residues 164-184; sequence HTIGLTSFIYFVIYSGALVRH. Residues 185-218 are Extracellular-facing; it reads EKASLACSSWPLCRKGAFILPQNFYEWVQMSHRT. Residues C191 and C197 are joined by a disulfide bond. Heme b is bound at residue H216. A helical transmembrane segment spans residues 219-239; it reads LAFILFIWLTYVAFHAMRNYA. The Cytoplasmic segment spans residues 240 to 249; that stretch reads QYRVIKYGYM. The helical transmembrane segment at 250-270 threads the bilayer; the sequence is IAFILICLQVTTGALTIFTAV. Topologically, residues 271–275 are extracellular; it reads NLYIA. Residues 276 to 296 form a helical membrane-spanning segment; the sequence is LLHALFITLLFGLLCYFILLI. H278 is a heme b binding site. Topologically, residues 297-300 are cytoplasmic; that stretch reads SRAK.

The protein belongs to the COX15/CtaA family. Type 1 subfamily. In terms of assembly, interacts with CtaB. It depends on heme b as a cofactor.

Its subcellular location is the cell membrane. The enzyme catalyses Fe(II)-heme o + 2 A + H2O = Fe(II)-heme a + 2 AH2. Its pathway is porphyrin-containing compound metabolism; heme A biosynthesis; heme A from heme O: step 1/1. Its function is as follows. Catalyzes the conversion of heme O to heme A by two successive hydroxylations of the methyl group at C8. The first hydroxylation forms heme I, the second hydroxylation results in an unstable dihydroxymethyl group, which spontaneously dehydrates, resulting in the formyl group of heme A. In Macrococcus caseolyticus (strain JCSC5402) (Macrococcoides caseolyticum), this protein is Heme A synthase.